The chain runs to 94 residues: Large ribosomal subunit protein bL25 (94 aa).

It belongs to the bacterial ribosomal protein bL25 family. Part of the 50S ribosomal subunit; part of the 5S rRNA/L5/L18/L25 subcomplex. Contacts the 5S rRNA. Binds to the 5S rRNA independently of L5 and L18.

This is one of the proteins that binds to the 5S RNA in the ribosome where it forms part of the central protuberance. In Salmonella agona (strain SL483), this protein is Large ribosomal subunit protein bL25.